We begin with the raw amino-acid sequence, 189 residues long: Adenylate kinase (189 aa).

Residue 11–16 participates in ATP binding; sequence GSGKGT. The segment at 31 to 60 is NMP; the sequence is STGDVLRAEIKNGTELGKTAKGYIDQGQLI. Residues T32, R37, 58-60, 86-89, and Q93 contribute to the AMP site; these read QLI and GFPR. Positions 127-137 are LID; the sequence is KRGKDSGRADD. R128 contacts ATP. Residues R134 and R145 each contribute to the AMP site. G173 lines the ATP pocket.

It belongs to the adenylate kinase family. As to quaternary structure, monomer.

The protein localises to the cytoplasm. It catalyses the reaction AMP + ATP = 2 ADP. Its pathway is purine metabolism; AMP biosynthesis via salvage pathway; AMP from ADP: step 1/1. In terms of biological role, catalyzes the reversible transfer of the terminal phosphate group between ATP and AMP. Plays an important role in cellular energy homeostasis and in adenine nucleotide metabolism. This Bacteroides thetaiotaomicron (strain ATCC 29148 / DSM 2079 / JCM 5827 / CCUG 10774 / NCTC 10582 / VPI-5482 / E50) protein is Adenylate kinase.